Here is a 104-residue protein sequence, read N- to C-terminus: L-rhamnose mutarotase (104 aa).

Tyr18 lines the substrate pocket. His22 (proton donor) is an active-site residue. Residues Tyr41 and 76-77 each bind substrate; that span reads WW.

Belongs to the rhamnose mutarotase family. In terms of assembly, homodimer.

It is found in the cytoplasm. It carries out the reaction alpha-L-rhamnose = beta-L-rhamnose. It functions in the pathway carbohydrate metabolism; L-rhamnose metabolism. In terms of biological role, involved in the anomeric conversion of L-rhamnose. The chain is L-rhamnose mutarotase from Enterobacter sp. (strain 638).